An 884-amino-acid polypeptide reads, in one-letter code: Microsomal triglyceride transfer protein large subunit (884 aa).

A signal peptide spans 1–21 (MMPVAGLLLCVTAVLCTSALG). Residues 26–660 (LDNGKLYRYS…QSNNALLHGL (635 aa)) form the Vitellogenin domain. Cys172 and Cys192 are oxidised to a cystine. Residue Asn348 is glycosylated (N-linked (GlcNAc...) asparagine). Cysteines 438 and 443 form a disulfide. N-linked (GlcNAc...) asparagine glycosylation occurs at Asn787.

In terms of assembly, heterodimer; heterodimerizes with the protein disulfide isomerase. Highest expression in the proximal part of the anterior intestine. Lower expression in the distal part of the anterior intestine, in the posterior portion of the intestinal tube and liver. Very low expression levels in heart, brain, ovary, testis and kidney.

The protein resides in the endoplasmic reticulum. Its subcellular location is the golgi apparatus. The catalysed reaction is a 1,2-diacyl-sn-glycero-3-phosphocholine(in) = a 1,2-diacyl-sn-glycero-3-phosphocholine(out). The enzyme catalyses a 1,2-diacyl-sn-glycero-3-phosphoethanolamine(in) = a 1,2-diacyl-sn-glycero-3-phosphoethanolamine(out). It catalyses the reaction a cholesterol ester(in) = a cholesterol ester(out). It carries out the reaction a triacyl-sn-glycerol(in) = a triacyl-sn-glycerol(out). Inhibited by naringenin. In terms of biological role, catalyzes the transport of triglyceride between phospholipid surfaces. Catalyzes the transport of cholesteryl ester, and phospholipid between phospholipid surfaces. Required for the assembly and secretion of plasma lipoproteins that contain apolipoprotein B. Required for yolk lipid utilization and absorption of dietary lipids in larvae. This is Microsomal triglyceride transfer protein large subunit from Danio rerio (Zebrafish).